The following is a 432-amino-acid chain: Enolase (432 aa).

Glutamine 167 lines the (2R)-2-phosphoglycerate pocket. Glutamate 209 acts as the Proton donor in catalysis. Mg(2+) contacts are provided by aspartate 246, glutamate 290, and aspartate 317. Lysine 342, arginine 371, serine 372, and lysine 393 together coordinate (2R)-2-phosphoglycerate. Residue lysine 342 is the Proton acceptor of the active site.

This sequence belongs to the enolase family. Component of the RNA degradosome, a multiprotein complex involved in RNA processing and mRNA degradation. It depends on Mg(2+) as a cofactor.

It localises to the cytoplasm. It is found in the secreted. The protein resides in the cell surface. The catalysed reaction is (2R)-2-phosphoglycerate = phosphoenolpyruvate + H2O. Its pathway is carbohydrate degradation; glycolysis; pyruvate from D-glyceraldehyde 3-phosphate: step 4/5. Its function is as follows. Catalyzes the reversible conversion of 2-phosphoglycerate (2-PG) into phosphoenolpyruvate (PEP). It is essential for the degradation of carbohydrates via glycolysis. The polypeptide is Enolase (Shigella sonnei (strain Ss046)).